Reading from the N-terminus, the 423-residue chain is Deferrochelatase (423 aa).

A signal peptide (tat-type signal) is located at residues 1-35 (MQYKDENGVNEPSRRRLLKVIGALALAGSCPVAHA). Heme b-binding positions include 236 to 238 (GTA), His-329, 334 to 336 (NPR), and Arg-347.

The protein belongs to the DyP-type peroxidase family. EfeB subfamily. In terms of assembly, homodimer. Part of a ferrous iron transporter composed of EfeU, EfeO and EfeB. The cofactor is heme b. Predicted to be exported by the Tat system. The position of the signal peptide cleavage has not been experimentally proven.

It is found in the periplasm. The enzyme catalyses heme b + 2 H(+) = protoporphyrin IX + Fe(2+). Its function is as follows. Involved in the recovery of exogenous heme iron. Extracts iron from heme while preserving the protoporphyrin ring intact. The polypeptide is Deferrochelatase (efeB) (Shigella boydii serotype 4 (strain Sb227)).